The following is a 367-amino-acid chain: Epoxide hydrolase 3 (367 aa).

A helical transmembrane segment spans residues 21–41 (GVFFWVLVYVAALLAAVSYIP). Asp173 serves as the catalytic Nucleophile. Catalysis depends on Tyr285, which acts as the Proton donor. His340 functions as the Proton acceptor in the catalytic mechanism.

The protein belongs to the AB hydrolase superfamily. Epoxide hydrolase family.

It is found in the microsome membrane. The enzyme catalyses an epoxide + H2O = an ethanediol. It catalyses the reaction 9,10-epoxyoctadecanoate + H2O = 9,10-dihydroxyoctadecanoate. The catalysed reaction is 9,10-epoxy-(12Z)-octadecenoate + H2O = 9,10-dihydroxy-(12Z)-octadecenoate. It carries out the reaction 8,9-epoxy-(5Z,11Z,14Z)-eicosatrienoate + H2O = 8,9-dihydroxy-(5Z,11Z,14Z)-eicosatrienoate. The enzyme catalyses 11,12-epoxy-(5Z,8Z,14Z)-eicosatrienoate + H2O = 11,12-dihydroxy-(5Z,8Z,14Z)-eicosatrienoate. It catalyses the reaction 14,15-epoxy-(5Z,8Z,11Z)-eicosatrienoate + H2O = 14,15-dihydroxy-(5Z,8Z,11Z)-eicosatrienoate. Its activity is regulated as follows. Inhibited by 1-(1-acetylpiperidin-4-yl)-3-(4-(trifl uoromethoxy)phenyl)urea (TPAU), 1-cyclohexyl-3-dodecylurea (CDU), 12-(3-adamantan-1-yl-ureido)-dodecanoic acid (AUDA), 1-((3S, 5S, 7S)-adamantan-1-yl)-3-(5-(2-(2-ethoxyethoxy) ethoxy)pentyl)urea (AEPU) and to a lesser extent by 8-(3-((3S, 5S, 7S)-adamantan-1-yl)ureido) octanoic acid (AUOA). Functionally, catalyzes the hydrolysis of epoxide-containing fatty acids. Active in vitro against epoxyeicosatrienoic acids (EETs) including 8,9-EET, 9,10-EET, 11,12-EET and 14,15-EET and leukotoxin. This chain is Epoxide hydrolase 3 (ephx3), found in Xenopus tropicalis (Western clawed frog).